The sequence spans 790 residues: Lysine biosynthesis regulatory protein LYS14 (790 aa).

2 disordered regions span residues 1 to 50 (MFES…SCFE) and 72 to 157 (FNHK…YSRN). A compositionally biased stretch (low complexity) spans 35 to 47 (SGSSFTNSGTSTS). Composition is skewed to polar residues over residues 75–113 (KQMTSPSNSNIGGENVESTTSSNDGSNENAGHPTTSEQD) and 120–142 (TISQADDNGHSSLTPNPAVTSTV). The segment at residues 159–186 (CSECKRRRMKCDETKPTCWQCARLNRQC) is a DNA-binding region (zn(2)-C6 fungal-type). The tract at residues 195–258 (KKRRTSNAQR…PKPITDNGKN (64 aa)) is disordered. Basic residues predominate over residues 222–239 (ARKRQHSSCKAEKKKKVR).

It is found in the nucleus. Functionally, activates the transcription of lysine biosynthesis genes. This activation is dependent on the inducer alpha-aminoadipate semialdehyde and repressed by lysine. The polypeptide is Lysine biosynthesis regulatory protein LYS14 (LYS14) (Saccharomyces cerevisiae (strain ATCC 204508 / S288c) (Baker's yeast)).